The primary structure comprises 86 residues: Large ribosomal subunit protein bL27 (86 aa).

Belongs to the bacterial ribosomal protein bL27 family.

The chain is Large ribosomal subunit protein bL27 from Flavobacterium johnsoniae (strain ATCC 17061 / DSM 2064 / JCM 8514 / BCRC 14874 / CCUG 350202 / NBRC 14942 / NCIMB 11054 / UW101) (Cytophaga johnsonae).